A 189-amino-acid chain; its full sequence is uncharacterized protein (189 aa).

This sequence belongs to the OsmC/Ohr family.

This is an uncharacterized protein from Methanocaldococcus jannaschii (strain ATCC 43067 / DSM 2661 / JAL-1 / JCM 10045 / NBRC 100440) (Methanococcus jannaschii).